The sequence spans 908 residues: DNA (cytosine-5)-methyltransferase 3A (908 aa).

Over residues 1–13 (MPSSGPGDTSISS) the composition is skewed to polar residues. 2 disordered regions span residues 1–183 (MPSS…PMPR) and 226–281 (SQAS…PEYE). A compositionally biased stretch (basic and acidic residues) spans 14–37 (LEREDDRKEGEEQEENRGKEERQE). A compositionally biased stretch (basic residues) spans 44 to 54 (KVGRPGRKRKH). A compositionally biased stretch (polar residues) spans 69–80 (TTKSQPTAQDSG). Ser-102 is subject to Phosphoserine. Residues 110–124 (GAPAEGEGTETPPEA) are compositionally biased toward low complexity. Thr-120 is modified (phosphothreonine). A Glycyl lysine isopeptide (Lys-Gly) (interchain with G-Cter in SUMO2) cross-link involves residue Lys-158. Arg-167 is subject to Omega-N-methylarginine. The interval 195-399 (SKRKRDEWLA…DTGKAVEVQN (205 aa)) is interaction with DNMT1 and DNMT3B. Phosphoserine is present on residues Ser-239 and Ser-251. Over residues 242 to 256 (AVQQPTDPASPTVAT) the composition is skewed to polar residues. Thr-257 carries the phosphothreonine modification. The region spanning 257-315 (TPEPVGADAGDKNATKAADDEPEYEDGRGFGIGELVWGKLRGFSWWPGRIVSWWMTGRS) is the PWWP domain. Over residues 265–275 (AGDKNATKAAD) the composition is skewed to basic and acidic residues. Ser-386 and Ser-389 each carry phosphoserine. Residues 443–462 (AYAPPPPAKKPRKSTTEKPK) are disordered. Residues 478 to 610 (EVRQKCRNIE…LQMFFANNHD (133 aa)) enclose the ADD domain. Residues 489–519 (ICISCGSLNVTLEHPLFIGGMCQNCKNCFLE) form a GATA-type; atypical zinc finger. An interaction with the PRC2/EED-EZH2 complex region spans residues 490-582 (CISCGSLNVT…KEDPWNCYMC (93 aa)). Residues 530–586 (QSYCTICCGGREVLMCGNNNCCRCFCVECVDLLVGPGAAQAAIKEDPWNCYMCGHKG) form a PHD-type; atypical zinc finger. One can recognise an SAM-dependent MTase C5-type domain in the interval 630-908 (IRVLSLFDGI…APLKEYFACV (279 aa)). S-adenosyl-L-methionine-binding positions include 637 to 641 (DGIAT), Glu-660, and 682 to 684 (DVR). The active site involves Cys-706. Residue Cys-706 is modified to S-methylcysteine; by autocatalysis. 887–889 (RSW) serves as a coordination point for S-adenosyl-L-methionine.

This sequence belongs to the class I-like SAM-binding methyltransferase superfamily. C5-methyltransferase family. In terms of assembly, heterotetramer composed of 1 DNMT3A homodimer and 2 DNMT3L subunits (DNMT3L-DNMT3A-DNMT3A-DNMT3L). Interacts with DNMT1 and DNMT3B. Interacts with MPHOSPH8. Interacts with histone H3 that is not methylated at 'Lys-4' (H3K4). Binds the ZBTB18 transcriptional repressor. Interacts with SETDB1. Associates with HDAC1 through its ADD domain. Interacts with UHRF1. Interacts with the PRC2/EED-EZH2 complex. Interacts with UBC9, PIAS1 and PIAS2. Interacts with SPOCD1. Interacts with ZNF263; recruited to the SIX3 promoter along with other proteins involved in chromatin modification and transcriptional corepression where it contributes to transcriptional repression. Post-translationally, sumoylated; sumoylation disrupts the ability to interact with histone deacetylases (HDAC1 and HDAC2) and repress transcription. Auto-methylated at Cys-706: auto-methylation takes place in absence of DNA substrate and inactivates the DNA methyltransferase activity. Inactivation by auto-methylation may be used to inactivate unused DNA methyltransferases in the cell.

It is found in the nucleus. The protein resides in the chromosome. It localises to the cytoplasm. The enzyme catalyses a 2'-deoxycytidine in DNA + S-adenosyl-L-methionine = a 5-methyl-2'-deoxycytidine in DNA + S-adenosyl-L-homocysteine + H(+). It catalyses the reaction L-cysteinyl-[protein] + S-adenosyl-L-methionine = S-methyl-L-cysteinyl-[protein] + S-adenosyl-L-homocysteine + H(+). Activated by binding to the regulatory factor DNMT3L. Auto-methylation at Cys-706 in absence of DNA inactivates the DNA methyltransferase activity. Required for genome-wide de novo methylation and is essential for the establishment of DNA methylation patterns during development. DNA methylation is coordinated with methylation of histones. It modifies DNA in a non-processive manner and also methylates non-CpG sites. May preferentially methylate DNA linker between 2 nucleosomal cores and is inhibited by histone H1. Plays a role in paternal and maternal imprinting. Required for methylation of most imprinted loci in germ cells. Acts as a transcriptional corepressor for ZBTB18. Recruited to trimethylated 'Lys-36' of histone H3 (H3K36me3) sites. Can actively repress transcription through the recruitment of HDAC activity. Also has weak auto-methylation activity on Cys-706 in absence of DNA. This Rattus norvegicus (Rat) protein is DNA (cytosine-5)-methyltransferase 3A (Dnmt3a).